The sequence spans 195 residues: MYKCDKPLILASSSPRRKAFLDQLGLEYSVRVKSIDEFAQPEESPEAFVCRMALEKGSAVSYQHPDSWVIAADTIVCLDQKILGKPRDSEDAVAMLCRLAGRSHTVMTAFAIICEKEKISEVQLVETSVYFSSFGEVEARAYVATGEPLDKAGSYGIQGVGALFVRKIAGSYSNVVGLPLAELVERLLYYSVISI.

Aspartate 73 acts as the Proton acceptor in catalysis.

This sequence belongs to the Maf family. YhdE subfamily. A divalent metal cation serves as cofactor.

The protein resides in the cytoplasm. It carries out the reaction dTTP + H2O = dTMP + diphosphate + H(+). The enzyme catalyses UTP + H2O = UMP + diphosphate + H(+). Its function is as follows. Nucleoside triphosphate pyrophosphatase that hydrolyzes dTTP and UTP. May have a dual role in cell division arrest and in preventing the incorporation of modified nucleotides into cellular nucleic acids. The sequence is that of dTTP/UTP pyrophosphatase from Desulfotalea psychrophila (strain LSv54 / DSM 12343).